The following is a 163-amino-acid chain: Putative pre-16S rRNA nuclease (163 aa).

It belongs to the YqgF nuclease family.

It localises to the cytoplasm. Its function is as follows. Could be a nuclease involved in processing of the 5'-end of pre-16S rRNA. This Rhizobium leguminosarum bv. trifolii (strain WSM2304) protein is Putative pre-16S rRNA nuclease.